Consider the following 309-residue polypeptide: Probable copper-dependent oxygenase clz3 (309 aa).

N-linked (GlcNAc...) asparagine glycosylation is found at Asn9 and Asn249. Residues 257 to 277 (FAVPLAAIAFIALIISGGYVI) traverse the membrane as a helical segment.

The protein belongs to the clz3 oxygenase family.

The protein localises to the membrane. The protein operates within secondary metabolite biosynthesis. Probable copper-dependent oxygenase; part of the gene cluster that mediates the biosynthesis of squalestatin S1 (SQS1, also known as zaragozic acid A), a heavily oxidized fungal polyketide that offers potent cholesterol lowering activity by targeting squalene synthase (SS). SQS1 is composed of a 2,8-dioxobicyclic[3.2.1]octane-3,4,5-tricarboxyclic acid core that is connected to two lipophilic polyketide arms. These initial steps feature the priming of an unusual benzoic acid starter unit onto the highly reducing polyketide synthase clz14, followed by oxaloacetate extension and product release to generate a tricarboxylic acid containing product. The phenylalanine ammonia lyase (PAL) clz10 and the acyl-CoA ligase clz12 are involved in transforming phenylalanine into benzoyl-CoA. The citrate synthase-like protein clz17 is involved in connecting the C-alpha-carbons of the hexaketide chain and oxaloacetate to afford the tricarboxylic acid unit. The potential hydrolytic enzymes, clz11 and clz13, are in close proximity to pks2 and may participate in product release. On the other side, the tetraketide arm is synthesized by a the squalestatin tetraketide synthase clz2 and enzymatically esterified to the core in the last biosynthetic step, by the acetyltransferase clz6. The biosynthesis of the tetraketide must involve 3 rounds of chain extension. After the first and second rounds methyl-transfer occurs, and in all rounds of extension the ketoreductase and dehydratase are active. The enoyl reductase and C-MeT of clz2 are not active in the final round of extension. The acetyltransferase clz6 appears to have a broad substrate selectivity for its acyl CoA substrate, allowing the in vitro synthesis of novel squalestatins. The biosynthesis of SQS1 requires several oxidative steps likely performed by oxidoreductases clz3, clz15 and clz16. Finally, in support of the identification of the cluster as being responsible for SQS1 production, the cluster contains a gene encoding a putative squalene synthase (SS) clz20, suggesting a likely mechanism for self-resistance. The sequence is that of Probable copper-dependent oxygenase clz3 from Cochliobolus lunatus (Filamentous fungus).